The primary structure comprises 920 residues: Protein translocase subunit SecA 2 (920 aa).

ATP-binding positions include Gln91, 109–113 (GEGKT), and Asp527. The segment covering 859 to 870 (GEGSALDRRPTD) has biased composition (basic and acidic residues). The segment at 859–920 (GEGSALDRRP…KSRNRRRRKR (62 aa)) is disordered. Basic residues predominate over residues 906–920 (PHRPGKSRNRRRRKR).

It belongs to the SecA family. As to quaternary structure, monomer and homodimer. Part of the essential Sec protein translocation apparatus which comprises SecA, SecYEG and auxiliary proteins SecDF. Other proteins may also be involved.

Its subcellular location is the cell membrane. It is found in the cytoplasm. The enzyme catalyses ATP + H2O + cellular proteinSide 1 = ADP + phosphate + cellular proteinSide 2.. Its function is as follows. Part of the Sec protein translocase complex. Interacts with the SecYEG preprotein conducting channel. Has a central role in coupling the hydrolysis of ATP to the transfer of proteins into and across the cell membrane, serving as an ATP-driven molecular motor driving the stepwise translocation of polypeptide chains across the membrane. This chain is Protein translocase subunit SecA 2, found in Streptomyces avermitilis (strain ATCC 31267 / DSM 46492 / JCM 5070 / NBRC 14893 / NCIMB 12804 / NRRL 8165 / MA-4680).